Consider the following 203-residue polypeptide: IQ domain-containing protein F3 (203 aa).

The span at 1-12 shows a compositional bias: basic and acidic residues; the sequence is MELDQDKKKETP. A disordered region spans residues 1–111; sequence MELDQDKKKE…CETQEADRSE (111 aa). Positions 13–82 form a coiled coil; sequence EETENVNEVQ…EADKAILERS (70 aa). Acidic residues predominate over residues 29-38; the sequence is DEETEAEAEE. A compositionally biased stretch (basic and acidic residues) spans 39–51; the sequence is ADKAILERSDSVK. Residues 64-73 show a composition bias toward acidic residues; that stretch reads DEETEAEAEE. 2 stretches are compositionally biased toward basic and acidic residues: residues 74 to 86 and 96 to 111; these read ADKA…DSVK and QIQE…DRSE. The 30-residue stretch at 129–158 folds into the IQ domain; sequence VMLAGVKIQAWWRGTLVRRTLLLAALNAWT.

In Mus musculus (Mouse), this protein is IQ domain-containing protein F3 (Iqcf3).